The sequence spans 225 residues: 2-phytyl-1,4-naphtoquinone methyltransferase (225 aa).

This sequence belongs to the class I-like SAM-binding methyltransferase superfamily. MenG/UbiE family.

The enzyme catalyses demethylphylloquinol + S-adenosyl-L-methionine = phylloquinol + S-adenosyl-L-homocysteine + H(+). It participates in cofactor biosynthesis; phylloquinone biosynthesis. Methyltransferase required for the conversion of 2-phytyl-1,4-beta-naphthoquinol to phylloquinol. In Thermosynechococcus vestitus (strain NIES-2133 / IAM M-273 / BP-1), this protein is 2-phytyl-1,4-naphtoquinone methyltransferase.